Reading from the N-terminus, the 542-residue chain is MFS-type efflux pump MMF1 (542 aa).

8 helical membrane-spanning segments follow: residues 24–44, 51–71, 98–118, 124–144, 151–171, 179–199, 215–235, and 248–268; these read WTIF…MTMI, IVAA…AFLL, VIFL…VLVV, GLGG…LTTL, FGLI…LGGV, WIFW…VLFL, LDLV…IAVT, and VWVP…VEWI. N285 carries an N-linked (GlcNAc...) asparagine glycan. The next 6 membrane-spanning stretches (helical) occupy residues 296 to 316, 326 to 346, 355 to 375, 384 to 404, 419 to 439, and 490 to 510; these read FLHG…FQAI, IWSF…GLLI, LIFI…HWSV, ISQI…LPPI, AYAF…TTIF, and ISDS…STFL.

It belongs to the major facilitator superfamily.

The protein localises to the cell membrane. Glycosyltransferase; part of the gene cluster that mediates the biosynthesis of mannosylerythritol lipids (MELs), surface-active substances that enhance the availability of water-insoluble substrates. MMF1 is directly involved in the secretiopn of MALs. The sequence is that of MFS-type efflux pump MMF1 from Pseudozyma antarctica (strain T-34) (Yeast).